The following is a 232-amino-acid chain: MKIGIIGAMEEEVTLLRDKIENCQTLSLGGCEIYTGQLNGTDVALLKSGIGKVAAALGATLLLERCKPDVIINTGSAGGLAPSLKVGDIVVSDEARYHDADVTAFGYEYGQLPGCPAGFKADDNLIAAAESCIAELNLNAVRGLIVSGDAFINGSVGLAKIRHNFPNAIAVEMEATAIAHVCHNFSVPFVVVRAISDVADQQSHLSFDEFLAVAAKQSTIMVETLVQKLARG.

E12 acts as the Proton acceptor in catalysis. Residues G78, I152, and 173–174 (ME) each bind substrate. The active-site Proton donor is the D197.

This sequence belongs to the PNP/UDP phosphorylase family. MtnN subfamily. As to quaternary structure, homodimer.

The enzyme catalyses S-adenosyl-L-homocysteine + H2O = S-(5-deoxy-D-ribos-5-yl)-L-homocysteine + adenine. The catalysed reaction is S-methyl-5'-thioadenosine + H2O = 5-(methylsulfanyl)-D-ribose + adenine. It catalyses the reaction 5'-deoxyadenosine + H2O = 5-deoxy-D-ribose + adenine. It functions in the pathway amino-acid biosynthesis; L-methionine biosynthesis via salvage pathway; S-methyl-5-thio-alpha-D-ribose 1-phosphate from S-methyl-5'-thioadenosine (hydrolase route): step 1/2. Functionally, catalyzes the irreversible cleavage of the glycosidic bond in both 5'-methylthioadenosine (MTA) and S-adenosylhomocysteine (SAH/AdoHcy) to adenine and the corresponding thioribose, 5'-methylthioribose and S-ribosylhomocysteine, respectively. Also cleaves 5'-deoxyadenosine, a toxic by-product of radical S-adenosylmethionine (SAM) enzymes, into 5-deoxyribose and adenine. Thus, is required for in vivo function of the radical SAM enzymes biotin synthase and lipoic acid synthase, that are inhibited by 5'-deoxyadenosine accumulation. This is 5'-methylthioadenosine/S-adenosylhomocysteine nucleosidase from Enterobacter sp. (strain 638).